Consider the following 555-residue polypeptide: Ribonuclease J2 (555 aa).

4 residues coordinate Zn(2+): His74, His76, His142, and Asp164. Residue 364–368 (HVSGH) coordinates substrate.

Belongs to the metallo-beta-lactamase superfamily. RNA-metabolizing metallo-beta-lactamase-like family. Bacterial RNase J subfamily. In terms of assembly, unclear whether it forms homodimers or belongs to a larger complex. According to probably does not form homodimers, while shows homodimer formation. Both reports show RNase J1 and J2 interaction, probably as a heterotetramer shows it is a component of a possible RNA degradosome complex composed of rny, rnjA, rnjB, pnp, pfkA and eno, while finds no evidence of an RNA degradosome complex. The cofactor is Zn(2+).

Its subcellular location is the cytoplasm. Functionally, endonucleolytically cleaves the 5'-leader sequence of certain mRNAs. Endonuclease digestion by the RNase J1/J2 complex occurs at a different site and in some cases more efficiently than J1 or J2 alone. The exonuclease activity of the J1/J2 complex is highly processive on substrates longer than 5 nucleotides, on shorter substrates is distributive. Plays a role in mRNA maturation and stability. Appears to have a limited effect on 16S rRNA maturation, despite its similarity to RNase J1. This subunit alone has very poor 5'-3' exonuclease activity. The chain is Ribonuclease J2 from Bacillus subtilis (strain 168).